Reading from the N-terminus, the 151-residue chain is Nucleoside diphosphate kinase (151 aa).

ATP is bound by residues K11, F59, R87, T93, R104, and N114. H117 serves as the catalytic Pros-phosphohistidine intermediate.

It belongs to the NDK family. In terms of assembly, homotetramer. Mg(2+) is required as a cofactor.

It localises to the cytoplasm. It catalyses the reaction a 2'-deoxyribonucleoside 5'-diphosphate + ATP = a 2'-deoxyribonucleoside 5'-triphosphate + ADP. It carries out the reaction a ribonucleoside 5'-diphosphate + ATP = a ribonucleoside 5'-triphosphate + ADP. In terms of biological role, major role in the synthesis of nucleoside triphosphates other than ATP. The ATP gamma phosphate is transferred to the NDP beta phosphate via a ping-pong mechanism, using a phosphorylated active-site intermediate. This Prochlorococcus marinus (strain MIT 9211) protein is Nucleoside diphosphate kinase.